The following is a 160-amino-acid chain: Ribosomal RNA large subunit methyltransferase H (160 aa).

Residues L77, G109, and 128–133 (LSNLTF) contribute to the S-adenosyl-L-methionine site.

The protein belongs to the RNA methyltransferase RlmH family. In terms of assembly, homodimer.

Its subcellular location is the cytoplasm. The catalysed reaction is pseudouridine(1915) in 23S rRNA + S-adenosyl-L-methionine = N(3)-methylpseudouridine(1915) in 23S rRNA + S-adenosyl-L-homocysteine + H(+). Its function is as follows. Specifically methylates the pseudouridine at position 1915 (m3Psi1915) in 23S rRNA. This Desulforamulus reducens (strain ATCC BAA-1160 / DSM 100696 / MI-1) (Desulfotomaculum reducens) protein is Ribosomal RNA large subunit methyltransferase H.